Reading from the N-terminus, the 48-residue chain is Toxin CSTX-14 (48 aa).

4 disulfide bridges follow: C3-C18, C10-C27, C17-C42, and C29-C40.

The protein belongs to the neurotoxin 19 (CSTX) family. 12 subfamily. As to quaternary structure, heterodimer of A and B chains; disulfide-linked. Contains 4 disulfide bonds. Expressed by the venom gland.

The protein localises to the secreted. The chain is Toxin CSTX-14 from Cupiennius salei (American wandering spider).